Reading from the N-terminus, the 212-residue chain is Large ribosomal subunit protein uL1 (212 aa).

Belongs to the universal ribosomal protein uL1 family. In terms of assembly, part of the 50S ribosomal subunit.

In terms of biological role, binds directly to 23S rRNA. Probably involved in E site tRNA release. Protein L1 is also a translational repressor protein, it controls the translation of its operon by binding to its mRNA. The protein is Large ribosomal subunit protein uL1 of Natronomonas pharaonis (strain ATCC 35678 / DSM 2160 / CIP 103997 / JCM 8858 / NBRC 14720 / NCIMB 2260 / Gabara) (Halobacterium pharaonis).